Reading from the N-terminus, the 264-residue chain is Acyl-[acyl-carrier-protein]--UDP-N-acetylglucosamine O-acyltransferase (264 aa).

This sequence belongs to the transferase hexapeptide repeat family. LpxA subfamily. Homotrimer.

It localises to the cytoplasm. The catalysed reaction is a (3R)-hydroxyacyl-[ACP] + UDP-N-acetyl-alpha-D-glucosamine = a UDP-3-O-[(3R)-3-hydroxyacyl]-N-acetyl-alpha-D-glucosamine + holo-[ACP]. Its pathway is glycolipid biosynthesis; lipid IV(A) biosynthesis; lipid IV(A) from (3R)-3-hydroxytetradecanoyl-[acyl-carrier-protein] and UDP-N-acetyl-alpha-D-glucosamine: step 1/6. Involved in the biosynthesis of lipid A, a phosphorylated glycolipid that anchors the lipopolysaccharide to the outer membrane of the cell. This is Acyl-[acyl-carrier-protein]--UDP-N-acetylglucosamine O-acyltransferase from Rickettsia prowazekii (strain Madrid E).